The sequence spans 166 residues: Sperm-egg fusion protein TMEM95 (166 aa).

A signal peptide spans 1 to 16; that stretch reads MWTLALGGIFLAAVEA. Disulfide bonds link Cys17–Cys118, Cys20–Cys121, Cys105–Cys128, and Cys109–Cys134. Residues 17–145 are Extracellular-facing; it reads CVFCRFPDRE…PGSHDLWEAR (129 aa). The N-linked (GlcNAc...) asparagine glycan is linked to Asn117. The chain crosses the membrane as a helical span at residues 146–165; it reads ILLLFVCGTALLLGVPSLAV. Glu166 is a topological domain (cytoplasmic).

It belongs to the TMEM95 family. As to quaternary structure, does not interact with sperm-egg fusion proteins IZUMO1 or IZUMO1R/JUNO. Post-translationally, N-glycosylated. As to expression, detected in testis and brain with higher levels in brain than testis.

Its subcellular location is the cytoplasmic vesicle. It localises to the secretory vesicle. The protein resides in the acrosome membrane. Its function is as follows. Sperm protein required for fusion of sperm with the egg membrane during fertilization. The sequence is that of Sperm-egg fusion protein TMEM95 from Bos taurus (Bovine).